The following is a 424-amino-acid chain: ATP synthase subunit beta, mitochondrial (424 aa).

The transit peptide at Met-1 to Leu-60 directs the protein to the mitochondrion. ATP-binding positions include Gly-187–Thr-194, Gly-188–Val-195, Glu-219–Arg-220, and Tyr-374.

It belongs to the ATPase alpha/beta chains family. In terms of assembly, F-type ATPases have 2 components, CF(1) - the catalytic core - and CF(0) - the membrane proton channel. CF(1) has five subunits: alpha(3), beta(3), gamma(1), delta(1), epsilon(1). CF(0) has three main subunits: a, b and c.

Its subcellular location is the mitochondrion. The protein localises to the mitochondrion inner membrane. The catalysed reaction is ATP + H2O + 4 H(+)(in) = ADP + phosphate + 5 H(+)(out). Its function is as follows. ATP synthase subunit beta; part of the gene cluster that mediates the biosynthesis of citreoviridin, an inhibitor of the of F1-ATPase beta-subunit. Mitochondrial membrane ATP synthase (F(1)F(0) ATP synthase or Complex V) produces ATP from ADP in the presence of a proton gradient across the membrane which is generated by electron transport complexes of the respiratory chain. Whereas ctvA to ctvD constitute the core biosynthetic gene cluster, ctvE acts as a self-resistance gene. This chain is ATP synthase subunit beta, mitochondrial, found in Aspergillus terreus (strain NIH 2624 / FGSC A1156).